Consider the following 236-residue polypeptide: Small ribosomal subunit protein uS2c (236 aa).

It belongs to the universal ribosomal protein uS2 family.

The protein resides in the plastid. It localises to the chloroplast. The polypeptide is Small ribosomal subunit protein uS2c (rps2) (Liriodendron tulipifera (Tuliptree)).